Here is a 341-residue protein sequence, read N- to C-terminus: MSGKIKIGINGFGRIGRLVMRATMLRPDIEVVAINDPFIDAEYMAYMFKYDSVHKTWPGHVNGSKDGFLVEGRKIHTFTESDPSKINWGAAGADIVIESTGVFTDIAKATAHLTGGAKKVIITAPSNDAPMYVMGVNHEKYNPATDHIISNASCTTNCLAPLAKVVNSKFGIKEGLMTTVHATTATQKTVDGPSKKDWRGGRAVNGNIIPSSTGAAKAVGKVLPELKGKLTGMAFRVPTNDVSVVDLTVTLEKATTYEDIMKALKEASEGEMKGVLAYTDEDVVSSDFVTDPASCTVDAKAGIMLSPTFVKLVAWYDNEWGYSNRVVDLALHVAKKAAVKV.

NAD(+) contacts are provided by residues Arg-14 to Ile-15 and Asp-36. D-glyceraldehyde 3-phosphate-binding positions include Ser-153–Thr-155, Thr-184, Thr-213–Gly-214, and Arg-236. Catalysis depends on Cys-154, which acts as the Nucleophile. Position 318 (Asn-318) interacts with NAD(+).

This sequence belongs to the glyceraldehyde-3-phosphate dehydrogenase family. In terms of assembly, homotetramer.

Its subcellular location is the cytoplasm. The enzyme catalyses D-glyceraldehyde 3-phosphate + phosphate + NAD(+) = (2R)-3-phospho-glyceroyl phosphate + NADH + H(+). It functions in the pathway carbohydrate degradation; glycolysis; pyruvate from D-glyceraldehyde 3-phosphate: step 1/5. In terms of biological role, key enzyme in glycolysis that catalyzes the first step of the pathway by converting D-glyceraldehyde 3-phosphate (G3P) into 3-phospho-D-glyceroyl phosphate. Essential for the maintenance of cellular ATP levels and carbohydrate metabolism. The chain is Glyceraldehyde-3-phosphate dehydrogenase, cytosolic (GAPC) from Chlamydomonas reinhardtii (Chlamydomonas smithii).